Reading from the N-terminus, the 229-residue chain is GTP-binding protein Di-Ras3 (229 aa).

GTP-binding positions include 44–51 (GTAGVGKS), 63–69 (RHEYLPT), 91–95 (DSKSG), 152–155 (NKSD), and 182–183 (AK). Positions 66 to 74 (YLPTIENTY) match the Effector region motif. Cys226 carries the cysteine methyl ester modification. Cys226 is lipidated: S-geranylgeranyl cysteine. A propeptide spans 227–229 (IIM) (removed in mature form).

It belongs to the small GTPase superfamily. Di-Ras family. In terms of tissue distribution, expressed in normal ovarian and breast epithelial cells but not in ovarian and breast cancers.

It localises to the cell membrane. This Homo sapiens (Human) protein is GTP-binding protein Di-Ras3 (DIRAS3).